Here is a 467-residue protein sequence, read N- to C-terminus: ATP-dependent protease ATPase subunit HslU (467 aa).

ATP is bound by residues isoleucine 18, 60–65, aspartate 280, glutamate 345, and arginine 417; that span reads GVGKTE.

It belongs to the ClpX chaperone family. HslU subfamily. In terms of assembly, a double ring-shaped homohexamer of HslV is capped on each side by a ring-shaped HslU homohexamer. The assembly of the HslU/HslV complex is dependent on binding of ATP.

The protein localises to the cytoplasm. ATPase subunit of a proteasome-like degradation complex; this subunit has chaperone activity. The binding of ATP and its subsequent hydrolysis by HslU are essential for unfolding of protein substrates subsequently hydrolyzed by HslV. HslU recognizes the N-terminal part of its protein substrates and unfolds these before they are guided to HslV for hydrolysis. This chain is ATP-dependent protease ATPase subunit HslU, found in Lactobacillus helveticus (strain DPC 4571).